A 76-amino-acid polypeptide reads, in one-letter code: uncharacterized protein (76 aa).

One can recognise an HTH cro/C1-type domain in the interval 15–69; that stretch reads VRIVRKEQNLRQDELAGVAGVGLRFIVDLEAGKPTAQIGKVLQVLQTLGCSIDIL. Residues 26-45 constitute a DNA-binding region (H-T-H motif); the sequence is QDELAGVAGVGLRFIVDLEA.

This is an uncharacterized protein from Sinorhizobium fredii (strain NBRC 101917 / NGR234).